Consider the following 628-residue polypeptide: Chaperone protein HtpG (628 aa).

Positions 1–337 are a; substrate-binding; sequence MSEKKYTFET…SADLPLNVSR (337 aa). A b region spans residues 338–554; that stretch reads EILQHNKVID…DYGMSLHMQK (217 aa). The c stretch occupies residues 555–628; the sequence is MMEEAGQSFM…FVKLVNKYIR (74 aa).

It belongs to the heat shock protein 90 family. As to quaternary structure, homodimer.

It localises to the cytoplasm. In terms of biological role, molecular chaperone. Has ATPase activity. The sequence is that of Chaperone protein HtpG from Francisella tularensis subsp. holarctica (strain FTNF002-00 / FTA).